We begin with the raw amino-acid sequence, 1767 residues long: Endo-alpha-N-acetylgalactosaminidase (1767 aa).

Residues Met1–Asp39 form the signal peptide. 2 stretches are compositionally biased toward basic and acidic residues: residues Asn63–Glu75 and Asp84–Ala111. Disordered regions lie at residues Asn63–Val137 and Val301–Val324. Low complexity predominate over residues Ala112–Glu124. Composition is skewed to basic and acidic residues over residues Thr127–Val137 and Asp304–Val324. The Ca(2+) site is built by Asp577, Asn579, Asp581, Lys583, and Asp588. The segment at Gly602 to Phe893 is catalytic. Asp658 lines the substrate pocket. Asp764 serves as the catalytic Nucleophile. Residue Glu796 is the Proton donor/acceptor of the active site. Residues Asp1233, Glu1235, Glu1281, Trp1284, and Asp1411 each coordinate Ca(2+). The LPXTG sorting signal signature appears at Leu1735–Gly1739. Pentaglycyl murein peptidoglycan amidated threonine is present on Thr1738. A propeptide spans Gly1739–Asp1767 (removed by sortase).

Belongs to the glycosyl hydrolase 101 family. A subfamily.

Its subcellular location is the secreted. It is found in the cell wall. The enzyme catalyses a 3-O-[beta-D-galactosyl-(1-&gt;3)-N-acetyl-alpha-D-galactosaminyl]-L-threonyl-[protein] + H2O = beta-D-galactosyl-(1-&gt;3)-N-acetyl-D-galactosamine + L-threonyl-[protein]. It carries out the reaction a 3-O-[beta-D-galactosyl-(1-&gt;3)-N-acetyl-alpha-D-galactosaminyl]-L-seryl-[protein] + H2O = beta-D-galactosyl-(1-&gt;3)-N-acetyl-D-galactosamine + L-seryl-[protein]. Involved in the breakdown of mucin-type O-linked glycans. Specifically removes the T-antigen disaccharide (Gal-beta-1,3-GalNAc-alpha) from extracellular host glycoproteins. Representative of a broadly important class of virulence factors. The chain is Endo-alpha-N-acetylgalactosaminidase from Streptococcus pneumoniae (strain ATCC BAA-255 / R6).